We begin with the raw amino-acid sequence, 172 residues long: Ribosome maturation factor RimM (172 aa).

Residues 95-168 form the PRC barrel domain; it reads DDGEFYYHEI…RVDVEILEGL (74 aa).

Belongs to the RimM family. In terms of assembly, binds ribosomal protein uS19.

The protein localises to the cytoplasm. Its function is as follows. An accessory protein needed during the final step in the assembly of 30S ribosomal subunit, possibly for assembly of the head region. Essential for efficient processing of 16S rRNA. May be needed both before and after RbfA during the maturation of 16S rRNA. It has affinity for free ribosomal 30S subunits but not for 70S ribosomes. This is Ribosome maturation factor RimM from Streptococcus pneumoniae (strain P1031).